The chain runs to 484 residues: Secreted RxLR effector protein 104 (484 aa).

A signal peptide spans 1 to 24; the sequence is MRSAYPVLTALLVVASSQIAAGSG. The RxLR-dEER signature appears at 48 to 65; sequence RFLRGSRDVHNNVANEER. A glycan (N-linked (GlcNAc...) asparagine) is linked at Asn175. Positions 324–463 are disordered; sequence ENPKGQSPYP…SSSVLTPEDV (140 aa). A compositionally biased stretch (polar residues) spans 327–346; it reads KGQSPYPSTPLTAASTSKGG. Positions 402–413 are enriched in low complexity; sequence SSSSGPSRAFAP. The segment covering 418–428 has biased composition (polar residues); sequence DQTFITENSRL.

This sequence belongs to the RxLR effector family.

The protein localises to the secreted. The protein resides in the host nucleus. Its function is as follows. Secreted effector that completely suppresses the host cell death induced by cell death-inducing proteins. The sequence is that of Secreted RxLR effector protein 104 from Plasmopara viticola (Downy mildew of grapevine).